The primary structure comprises 256 residues: Rhamnolipids biosynthesis 3-oxoacyl-[acyl-carrier-protein] reductase (256 aa).

14 to 38 is an NADP(+) binding site; it reads VTGGSRGIGQMIAQGLLEAGARVFI. Position 148 (Ser148) interacts with substrate. Tyr162 functions as the Proton acceptor in the catalytic mechanism.

This sequence belongs to the short-chain dehydrogenases/reductases (SDR) family.

The catalysed reaction is a (3R)-hydroxyacyl-[ACP] + NADP(+) = a 3-oxoacyl-[ACP] + NADPH + H(+). It functions in the pathway lipid metabolism; rhamnolipid biosynthesis. Functionally, required for the synthesis of the beta-hydroxy acid moiety of rhamnolipids. This is Rhamnolipids biosynthesis 3-oxoacyl-[acyl-carrier-protein] reductase (rhlG) from Pseudomonas aeruginosa (strain ATCC 15692 / DSM 22644 / CIP 104116 / JCM 14847 / LMG 12228 / 1C / PRS 101 / PAO1).